The primary structure comprises 309 residues: Lipoyl synthase (309 aa).

Residues cysteine 56, cysteine 61, cysteine 67, cysteine 82, cysteine 86, cysteine 89, and serine 296 each contribute to the [4Fe-4S] cluster site. A Radical SAM core domain is found at 68-285; it reads FKRGTATFMI…RVAGLKMGFS (218 aa).

The protein belongs to the radical SAM superfamily. Lipoyl synthase family. [4Fe-4S] cluster is required as a cofactor.

The protein localises to the cytoplasm. The catalysed reaction is [[Fe-S] cluster scaffold protein carrying a second [4Fe-4S](2+) cluster] + N(6)-octanoyl-L-lysyl-[protein] + 2 oxidized [2Fe-2S]-[ferredoxin] + 2 S-adenosyl-L-methionine + 4 H(+) = [[Fe-S] cluster scaffold protein] + N(6)-[(R)-dihydrolipoyl]-L-lysyl-[protein] + 4 Fe(3+) + 2 hydrogen sulfide + 2 5'-deoxyadenosine + 2 L-methionine + 2 reduced [2Fe-2S]-[ferredoxin]. It participates in protein modification; protein lipoylation via endogenous pathway; protein N(6)-(lipoyl)lysine from octanoyl-[acyl-carrier-protein]: step 2/2. In terms of biological role, catalyzes the radical-mediated insertion of two sulfur atoms into the C-6 and C-8 positions of the octanoyl moiety bound to the lipoyl domains of lipoate-dependent enzymes, thereby converting the octanoylated domains into lipoylated derivatives. The chain is Lipoyl synthase from Syntrophotalea carbinolica (strain DSM 2380 / NBRC 103641 / GraBd1) (Pelobacter carbinolicus).